A 232-amino-acid polypeptide reads, in one-letter code: MAKLTKKQKEAQSKIENGKTYTVAEASALIKEVSNANFDASVDLAVRLNVDPRKANQMVRGVVTLPHGTGKDVKVLALVTPDKEEEAKEAGADYVGLDEYLDKIKGGWTDVDVIITMPSVMGKLGPLGRVLGPRGLMPNPKTGTVTMDIAKAVSDVKAGKIDFKVDKHGIVHAGVGKASFDAEKIAGNARELLTTLVKLKPQAAKGVYIKTIYMSSTMSPSVQIDTKRFTEQ.

This sequence belongs to the universal ribosomal protein uL1 family. As to quaternary structure, part of the 50S ribosomal subunit.

Binds directly to 23S rRNA. The L1 stalk is quite mobile in the ribosome, and is involved in E site tRNA release. In terms of biological role, protein L1 is also a translational repressor protein, it controls the translation of the L11 operon by binding to its mRNA. In Christiangramia forsetii (strain DSM 17595 / CGMCC 1.15422 / KT0803) (Gramella forsetii), this protein is Large ribosomal subunit protein uL1.